We begin with the raw amino-acid sequence, 321 residues long: Putrescine export system permease protein SapB (321 aa).

Residues 1–8 are Cytoplasmic-facing; sequence MIIFTLRR. A helical transmembrane segment spans residues 9–29; sequence ILLLIVTLFLLTFVGFSLSYF. The Periplasmic portion of the chain corresponds to 30–80; that stretch reads TPHAPLQGASLWNAWVFWFNGLIHWDFGVSSINGQPIAEQLKEVFPATMEL. In terms of domain architecture, ABC transmembrane type-1 spans 74–302; sequence FPATMELCIL…SLVIIVNVIS (229 aa). The chain crosses the membrane as a helical span at residues 81–101; that stretch reads CILAFGFALIVGIPVGMIAGI. Over 102–112 the chain is Cytoplasmic; it reads TRHKWQDNLIN. A helical transmembrane segment spans residues 113 to 133; it reads AIALLGFSIPVFWLALLLTLF. The Periplasmic portion of the chain corresponds to 134–174; sequence CSLTLGWLPVSGRFDLLYEVKPITGFALIDAWLSDSPWRDE. Residues 175–195 traverse the membrane as a helical segment; that stretch reads MIMSAIRHMILPVITLSVAPT. Over 196–248 the chain is Cytoplasmic; that stretch reads TEVIRLMRISTIEVYDQNYVKAAATRGLSRFTILRRHVLHNALPPVIPRLGLQ. A helical transmembrane segment spans residues 249 to 269; sequence FSTMLTLAMITEMVFSWPGLG. Over 270–280 the chain is Periplasmic; that stretch reads RWLINAIRQQD. A helical membrane pass occupies residues 281-301; sequence YAAISAGVMVCGSLVIIVNVI. The Cytoplasmic segment spans residues 302-321; it reads SDILGAMANPLKHKEWYALR.

It belongs to the binding-protein-dependent transport system permease family. OppBC subfamily.

The protein resides in the cell inner membrane. Functionally, part of a putrescine export transport system, does not play a role in resistance to antimicrobial peptides. This Escherichia coli (strain K12) protein is Putrescine export system permease protein SapB (sapB).